The sequence spans 349 residues: Isopentenyl-diphosphate delta-isomerase (349 aa).

A substrate-binding site is contributed by 6–7 (RK). FMN contacts are provided by residues 62-64 (AMT), Ser-93, and Asn-122. Gln-152 lines the substrate pocket. Position 153 (Glu-153) interacts with Mg(2+). FMN-binding positions include Lys-184, Thr-214, 258 to 259 (GG), and 280 to 281 (AG).

This sequence belongs to the IPP isomerase type 2 family. Homooctamer. Dimer of tetramers. FMN serves as cofactor. It depends on NADPH as a cofactor. Mg(2+) is required as a cofactor.

Its subcellular location is the cytoplasm. The enzyme catalyses isopentenyl diphosphate = dimethylallyl diphosphate. Functionally, involved in the biosynthesis of isoprenoids. Catalyzes the 1,3-allylic rearrangement of the homoallylic substrate isopentenyl (IPP) to its allylic isomer, dimethylallyl diphosphate (DMAPP). The chain is Isopentenyl-diphosphate delta-isomerase from Bacillus cereus (strain ATCC 10987 / NRS 248).